We begin with the raw amino-acid sequence, 330 residues long: Lysophospholipase D GDPD3 (330 aa).

Met1 is a topological domain (cytoplasmic). The helical transmembrane segment at 2–22 (IPLLYFVLPTLGSYVMLSIFF) threads the bilayer. Topologically, residues 23 to 200 (LRRPHLLHTP…ANPEMPMAFT (178 aa)) are extracellular. In terms of domain architecture, GP-PDE spans 39–308 (IRLAAHRGGS…DYPTALRHYL (270 aa)). A divalent metal cation contacts are provided by Glu71, Asp73, and His86. A helical membrane pass occupies residues 201-221 (IWRSFWILLLYYLGLLPFVSI). The Cytoplasmic portion of the chain corresponds to 222–330 (PEKFFFCFLP…EALSCLSLKK (109 aa)). Positions 311 to 330 (QEEETQPPQPEALSCLSLKK) are disordered.

It belongs to the glycerophosphoryl diester phosphodiesterase family. As to expression, highly expressed in stomach and kidney. In stomach detected in the glandular epithelium. Predominantly expressed in the stomach (at protein level).

Its subcellular location is the membrane. The protein resides in the cytoplasm. The protein localises to the perinuclear region. It localises to the endoplasmic reticulum membrane. The catalysed reaction is 1-hexadecanoyl-sn-glycero-3-phosphocholine + H2O = 1-hexadecanoyl-sn-glycero-3-phosphate + choline + H(+). The enzyme catalyses 1-O-hexadecyl-sn-glycero-3-phosphocholine + H2O = 1-O-hexadecyl-sn-glycero-3-phosphate + choline + H(+). It carries out the reaction 1-O-(1Z-octadecenyl)-sn-glycero-3-phospho-N-hexadecanoyl-ethanolamine + H2O = 1-O-(1Z-octadecenyl)-sn-glycero-3-phosphate + N-hexadecanoylethanolamine + H(+). It catalyses the reaction N-(5Z,8Z,11Z,14Z-eicosatetraenoyl)-1-(9Z-octadecenoyl)-sn-glycero-3-phosphoethanolamine + H2O = N-(5Z,8Z,11Z,14Z-eicosatetraenoyl)-ethanolamine + 1-(9Z-octadecenoyl)-sn-glycero-3-phosphate + H(+). The catalysed reaction is N,1-di-(9Z-octadecenoyl)-sn-glycero-3-phosphoethanolamine + H2O = N-(9Z-octadecenoyl) ethanolamine + 1-(9Z-octadecenoyl)-sn-glycero-3-phosphate + H(+). The enzyme catalyses N-hexadecanoyl-1-(9Z-octadecenoyl)-sn-glycero-3-phosphoethanolamine + H2O = N-hexadecanoylethanolamine + 1-(9Z-octadecenoyl)-sn-glycero-3-phosphate + H(+). It carries out the reaction 1-hexadecanoyl-sn-glycero-3-phosphocholine + H2O = sn-glycerol 3-phosphocholine + hexadecanoate + H(+). With respect to regulation, lysophospholipase D activity is stimulated by calcium. Loss of lysophospholipase D activity in presence of EDTA. Hydrolyzes lysoglycerophospholipids to produce lysophosphatidic acid (LPA) and the corresponding amines. Shows a preference for 1-O-alkyl-sn-glycero-3-phosphocholine (lyso-PAF), lysophosphatidylcholine (lyso-PC) and N-acylethanolamine lysophospholipids. Does not display glycerophosphodiester phosphodiesterase activity, since it cannot hydrolyze either glycerophosphoinositol or glycerophosphocholine. The chain is Lysophospholipase D GDPD3 from Mus musculus (Mouse).